Reading from the N-terminus, the 353-residue chain is S-adenosylmethionine:tRNA ribosyltransferase-isomerase (353 aa).

The protein belongs to the QueA family. As to quaternary structure, monomer.

The protein localises to the cytoplasm. It carries out the reaction 7-aminomethyl-7-carbaguanosine(34) in tRNA + S-adenosyl-L-methionine = epoxyqueuosine(34) in tRNA + adenine + L-methionine + 2 H(+). It functions in the pathway tRNA modification; tRNA-queuosine biosynthesis. Transfers and isomerizes the ribose moiety from AdoMet to the 7-aminomethyl group of 7-deazaguanine (preQ1-tRNA) to give epoxyqueuosine (oQ-tRNA). This Dinoroseobacter shibae (strain DSM 16493 / NCIMB 14021 / DFL 12) protein is S-adenosylmethionine:tRNA ribosyltransferase-isomerase.